Here is a 341-residue protein sequence, read N- to C-terminus: Geranylgeranyl pyrophosphate synthase penG (341 aa).

Residues K68, R71, and H100 each coordinate isopentenyl diphosphate. 2 residues coordinate Mg(2+): D107 and D111. R116 lines the dimethylallyl diphosphate pocket. R117 lines the isopentenyl diphosphate pocket. Residues K194, T195, and Q228 each contribute to the dimethylallyl diphosphate site. D231 is a Mg(2+) binding site. Dimethylallyl diphosphate-binding residues include N235, K245, and K255.

Belongs to the FPP/GGPP synthase family. Mg(2+) is required as a cofactor.

The enzyme catalyses isopentenyl diphosphate + dimethylallyl diphosphate = (2E)-geranyl diphosphate + diphosphate. It carries out the reaction isopentenyl diphosphate + (2E)-geranyl diphosphate = (2E,6E)-farnesyl diphosphate + diphosphate. The catalysed reaction is isopentenyl diphosphate + (2E,6E)-farnesyl diphosphate = (2E,6E,10E)-geranylgeranyl diphosphate + diphosphate. The protein operates within secondary metabolite biosynthesis. Geranylgeranyl pyrophosphate synthase; part of the gene cluster that mediates the biosynthesis of the indole diterpenes penitrems. The geranylgeranyl diphosphate (GGPP) synthase penG catalyzes the first step in penitrem biosynthesis via conversion of farnesyl pyrophosphate and isopentyl pyrophosphate into geranylgeranyl pyrophosphate (GGPP). Condensation of indole-3-glycerol phosphate with GGPP by the prenyl transferase penC then forms 3-geranylgeranylindole (3-GGI). Epoxidation by the FAD-dependent monooxygenase penM leads to a epoxidized-GGI that is substrate of the terpene cyclase penB for cyclization to yield paspaline. Paspaline is subsequently converted to 13-desoxypaxilline by the cytochrome P450 monooxygenase penP, the latter being then converted to paxilline by the cytochrome P450 monooxygenase penQ. Paxilline is converted to beta-paxitriol via C-10 ketoreduction by the short-chain dehydrogenase PC-15 which can be monoprenylated at the C-20 by the indole diterpene prenyltransferase penD. A two-step elimination (acetylation and elimination) process performed by the O-acetyltransferase PC-16 and the P.simplicissimum ptmI-ortholog not yet identified in P.crustosum, leads to the production of the prenylated form of penijanthine. The FAD-linked oxidoreductase ptmO then converts the prenylated form of penijanthine into PC-M5 which is in turn transformed into PC-M4 by the aromatic dimethylallyltransferase PC-22. A series of oxidation steps involving 4 cytochrome P450 monooxygenases (PC-21, PC-05, PC-23, PC-20) and a FAD-dependent monooxygenase (PC-14) are required for the transformation of PC-M4 to penitrems A and E. Synthesis of these final products is proposed to proceed via penitrems D and C (PC-21, PC-05, PC-14) and penitrems B and F (PC-21, PC-05, PC-14, PC-23). This chain is Geranylgeranyl pyrophosphate synthase penG, found in Penicillium crustosum (Blue mold fungus).